A 381-amino-acid chain; its full sequence is Tetraacyldisaccharide 4'-kinase (381 aa).

78–85 (AVGGTGKT) is an ATP binding site.

The protein belongs to the LpxK family.

It carries out the reaction a lipid A disaccharide + ATP = a lipid IVA + ADP + H(+). It participates in glycolipid biosynthesis; lipid IV(A) biosynthesis; lipid IV(A) from (3R)-3-hydroxytetradecanoyl-[acyl-carrier-protein] and UDP-N-acetyl-alpha-D-glucosamine: step 6/6. Transfers the gamma-phosphate of ATP to the 4'-position of a tetraacyldisaccharide 1-phosphate intermediate (termed DS-1-P) to form tetraacyldisaccharide 1,4'-bis-phosphate (lipid IVA). The protein is Tetraacyldisaccharide 4'-kinase of Syntrophobacter fumaroxidans (strain DSM 10017 / MPOB).